We begin with the raw amino-acid sequence, 240 residues long: Ribosomal RNA small subunit methyltransferase I (240 aa).

Belongs to the methyltransferase superfamily. RsmI family.

It is found in the cytoplasm. It catalyses the reaction cytidine(1402) in 16S rRNA + S-adenosyl-L-methionine = 2'-O-methylcytidine(1402) in 16S rRNA + S-adenosyl-L-homocysteine + H(+). Catalyzes the 2'-O-methylation of the ribose of cytidine 1402 (C1402) in 16S rRNA. The sequence is that of Ribosomal RNA small subunit methyltransferase I from Leptospira biflexa serovar Patoc (strain Patoc 1 / ATCC 23582 / Paris).